Here is a 118-residue protein sequence, read N- to C-terminus: Ribosome-binding factor A (118 aa).

This sequence belongs to the RbfA family. Monomer. Binds 30S ribosomal subunits, but not 50S ribosomal subunits or 70S ribosomes.

Its subcellular location is the cytoplasm. One of several proteins that assist in the late maturation steps of the functional core of the 30S ribosomal subunit. Associates with free 30S ribosomal subunits (but not with 30S subunits that are part of 70S ribosomes or polysomes). Required for efficient processing of 16S rRNA. May interact with the 5'-terminal helix region of 16S rRNA. The polypeptide is Ribosome-binding factor A (Dehalococcoides mccartyi (strain ATCC BAA-2100 / JCM 16839 / KCTC 5957 / BAV1)).